The primary structure comprises 713 residues: Ribosomal RNA large subunit methyltransferase K/L (713 aa).

In terms of domain architecture, THUMP spans 46–157; that stretch reads TAYRICLWSR…RDQATLSLDL (112 aa).

The protein belongs to the methyltransferase superfamily. RlmKL family.

Its subcellular location is the cytoplasm. It catalyses the reaction guanosine(2445) in 23S rRNA + S-adenosyl-L-methionine = N(2)-methylguanosine(2445) in 23S rRNA + S-adenosyl-L-homocysteine + H(+). The enzyme catalyses guanosine(2069) in 23S rRNA + S-adenosyl-L-methionine = N(2)-methylguanosine(2069) in 23S rRNA + S-adenosyl-L-homocysteine + H(+). Its function is as follows. Specifically methylates the guanine in position 2445 (m2G2445) and the guanine in position 2069 (m7G2069) of 23S rRNA. The polypeptide is Ribosomal RNA large subunit methyltransferase K/L (Syntrophotalea carbinolica (strain DSM 2380 / NBRC 103641 / GraBd1) (Pelobacter carbinolicus)).